Reading from the N-terminus, the 680-residue chain is ABC transporter B family member 24, mitochondrial (680 aa).

Residues 1–75 (MMRVSQLQLC…MFFSTSTSAP (75 aa)) constitute a mitochondrion transit peptide. Residues 108-402 (VISAFACLVG…LGVVYSDTVQ (295 aa)) enclose the ABC transmembrane type-1 domain. A run of 6 helical transmembrane segments spans residues 109–129 (ISAF…PFLF), 145–165 (NPYL…YGIA), 232–252 (AMVF…CILA), 255–275 (FGAV…AFTL), 340–360 (FALL…TAMV), and 376–396 (LVMV…LGVV). One can recognise an ABC transporter domain in the interval 439 to 673 (ISFENVHFSY…SGRYAKLWTQ (235 aa)). ATP contacts are provided by residues Y448 and 472–483 (GSSGSGKSTILR).

It belongs to the ABC transporter superfamily. ABCB family. Heavy Metal importer (TC 3.A.1.210) subfamily. Homodimer. As to expression, mostly expressed at low levels in roots and flowers.

It localises to the mitochondrion inner membrane. In terms of biological role, performs an essential function in the generation of cytoplasmic iron-sulfur proteins by mediating export of Fe/S cluster precursors synthesized by NFS1 and other mitochondrial proteins. Not involved in the export of cyclic pyranopterin monophosphate (cPMP) from mitochondria to the cytosol. The polypeptide is ABC transporter B family member 24, mitochondrial (ABCB24) (Arabidopsis thaliana (Mouse-ear cress)).